The following is a 202-amino-acid chain: N-(5'-phosphoribosyl)anthranilate isomerase (202 aa).

This sequence belongs to the TrpF family.

The catalysed reaction is N-(5-phospho-beta-D-ribosyl)anthranilate = 1-(2-carboxyphenylamino)-1-deoxy-D-ribulose 5-phosphate. Its pathway is amino-acid biosynthesis; L-tryptophan biosynthesis; L-tryptophan from chorismate: step 3/5. The protein is N-(5'-phosphoribosyl)anthranilate isomerase of Listeria monocytogenes serotype 4b (strain F2365).